We begin with the raw amino-acid sequence, 261 residues long: Indole-3-glycerol phosphate synthase (261 aa).

It belongs to the TrpC family.

It carries out the reaction 1-(2-carboxyphenylamino)-1-deoxy-D-ribulose 5-phosphate + H(+) = (1S,2R)-1-C-(indol-3-yl)glycerol 3-phosphate + CO2 + H2O. The protein operates within amino-acid biosynthesis; L-tryptophan biosynthesis; L-tryptophan from chorismate: step 4/5. The protein is Indole-3-glycerol phosphate synthase of Burkholderia lata (strain ATCC 17760 / DSM 23089 / LMG 22485 / NCIMB 9086 / R18194 / 383).